We begin with the raw amino-acid sequence, 369 residues long: O-methyltransferase 12 (369 aa).

S-adenosyl-L-methionine-binding positions include G181, D204, 229 to 231 (GDF), D230, F231, and K244. The Proton acceptor role is filled by H248.

The protein belongs to the class I-like SAM-binding methyltransferase superfamily. Cation-independent O-methyltransferase family. COMT subfamily.

It catalyses the reaction resorcinol + S-adenosyl-L-methionine = 3-methoxyphenol + S-adenosyl-L-homocysteine + H(+). In terms of biological role, S-adenosyl-L-methionine dependent O-methyltransferase that may be involved in modifying resorcinol ring to synthesize a variant of 4-methyl-5-pentylbenzene-1,3-diol. This Dictyostelium discoideum (Social amoeba) protein is O-methyltransferase 12 (omt12).